The following is a 276-amino-acid chain: Hemin import ATP-binding protein HmuV (276 aa).

One can recognise an ABC transporter domain in the interval 2–259 (LTAHHLDVAR…AHIAQCYGFA (258 aa)). 34–41 (GRNGAGKS) serves as a coordination point for ATP.

Belongs to the ABC transporter superfamily. Heme (hemin) importer (TC 3.A.1.14.5) family. As to quaternary structure, the complex is composed of two ATP-binding proteins (HmuV), two transmembrane proteins (HmuU) and a solute-binding protein (HmuT).

The protein localises to the cell inner membrane. In terms of biological role, part of the ABC transporter complex HmuTUV involved in hemin import. Responsible for energy coupling to the transport system. The polypeptide is Hemin import ATP-binding protein HmuV (Burkholderia cenocepacia (strain HI2424)).